The chain runs to 186 residues: Cytochrome c oxidase subunit 4, mitochondrial (186 aa).

The N-terminal 31 residues, 1–31 (MLLSRTAVAVARRATAAPALRRSIATTVVRC), are a transit peptide targeting the mitochondrion. The Zn(2+) site is built by C118, H126, C142, and C145.

Belongs to the cytochrome c oxidase subunit 5B family. In terms of assembly, component of the cytochrome c oxidase (complex IV, CIV), a multisubunit enzyme composed of 11 subunits. The complex is composed of a catalytic core of 3 subunits Cox1, Cox2 and Cox3, encoded in the mitochondrial DNA, and 8 supernumerary subunits Cox4, Cox5a/Cox5, Cox6, Cox7, Cox8, Cox7a/Cox9, Cox6b/Cox12 and Cox6a/Cox13, which are encoded in the nuclear genome. The complex exists as a monomer or a dimer and forms respiratory supercomplexes (SCs) in the inner mitochondrial membrane with NADH-ubiquinone oxidoreductase (complex I, CI) and ubiquinol-cytochrome c oxidoreductase (cytochrome b-c1 complex, complex III, CIII), resulting in various different assemblies (supercomplexes I(1)IV(1), I(1)III(3)IV(2), III(2)IV(1) and III(2)IV(2) as well as larger supercomplexes of compositions like I(1)III(2)IV(5-6)).

The protein localises to the mitochondrion inner membrane. It participates in energy metabolism; oxidative phosphorylation. Its function is as follows. Component of the cytochrome c oxidase, the last enzyme in the mitochondrial electron transport chain which drives oxidative phosphorylation. The respiratory chain contains 3 multisubunit complexes succinate dehydrogenase (complex II, CII), ubiquinol-cytochrome c oxidoreductase (cytochrome b-c1 complex, complex III, CIII) and cytochrome c oxidase (complex IV, CIV), that cooperate to transfer electrons derived from NADH and succinate to molecular oxygen, creating an electrochemical gradient over the inner membrane that drives transmembrane transport and the ATP synthase. Cytochrome c oxidase is the component of the respiratory chain that catalyzes the reduction of oxygen to water. Electrons originating from reduced cytochrome c in the intermembrane space (IMS) are transferred via the dinuclear copper A center (CU(A)) of Cox2 and heme A of Cox1 to the active site in Cox1, a binuclear center (BNC) formed by heme A3 and copper B (CU(B)). The BNC reduces molecular oxygen to 2 water molecules using 4 electrons from cytochrome c in the IMS and 4 protons from the mitochondrial matrix. The protein is Cytochrome c oxidase subunit 4, mitochondrial (cox-4) of Neurospora crassa (strain ATCC 24698 / 74-OR23-1A / CBS 708.71 / DSM 1257 / FGSC 987).